Reading from the N-terminus, the 129-residue chain is Small ribosomal subunit protein uS11 (129 aa).

The protein belongs to the universal ribosomal protein uS11 family. Part of the 30S ribosomal subunit. Interacts with proteins S7 and S18. Binds to IF-3.

In terms of biological role, located on the platform of the 30S subunit, it bridges several disparate RNA helices of the 16S rRNA. Forms part of the Shine-Dalgarno cleft in the 70S ribosome. This Chelativorans sp. (strain BNC1) protein is Small ribosomal subunit protein uS11.